The chain runs to 318 residues: NAC domain-containing protein 59 (318 aa).

Positions 24 to 174 constitute an NAC domain; sequence LPPGFRFHPT…ECVISRVFHT (151 aa). The DNA-binding element occupies 121 to 180; that stretch reads VGMKKTLVFYKGRAPKGVKTNWVMHEYRLEGKFAIDNLSKTAKNECVISRVFHTRTDGTK.

In terms of tissue distribution, mostly expressed in root cortex, phloem, atrichoblast and quiescent center (QC), and, to a lower extent, in root endodermis, xylem, pericycle, columella and lateral root cap (LRC). Expressed in roots, cotyledons, very young leaves, senescing leaves, mature flowers and pollen.

It localises to the nucleus. Its function is as follows. Transcription activator that binds to DNA in promoters of target genes on a specific bipartite motif 5'-[AG]CGT[AG](4-5n)[AG][CT]ACGCAA-3'. Triggers the expression of senescence-associated genes during age-, salt- and dark-induced senescence through a regulatory network that may involve cross-talk with salt- and H(2)O(2)-dependent signaling pathways. In Arabidopsis thaliana (Mouse-ear cress), this protein is NAC domain-containing protein 59.